Here is a 107-residue protein sequence, read N- to C-terminus: Iron-binding protein IscA (107 aa).

Residues Cys35, Cys99, and Cys101 each contribute to the Fe cation site.

It belongs to the HesB/IscA family. As to quaternary structure, homodimer; may form tetramers and higher multimers. Requires Fe cation as cofactor.

Its function is as follows. Is able to transfer iron-sulfur clusters to apo-ferredoxin. Multiple cycles of [2Fe2S] cluster formation and transfer are observed, suggesting that IscA acts catalytically. Recruits intracellular free iron so as to provide iron for the assembly of transient iron-sulfur cluster in IscU in the presence of IscS, L-cysteine and the thioredoxin reductase system TrxA/TrxB. The polypeptide is Iron-binding protein IscA (Klebsiella pneumoniae subsp. pneumoniae (strain ATCC 700721 / MGH 78578)).